Reading from the N-terminus, the 415-residue chain is Histidine--tRNA ligase (415 aa).

This sequence belongs to the class-II aminoacyl-tRNA synthetase family. In terms of assembly, homodimer.

The protein localises to the cytoplasm. It carries out the reaction tRNA(His) + L-histidine + ATP = L-histidyl-tRNA(His) + AMP + diphosphate + H(+). The polypeptide is Histidine--tRNA ligase (Idiomarina loihiensis (strain ATCC BAA-735 / DSM 15497 / L2-TR)).